Here is a 108-residue protein sequence, read N- to C-terminus: Succinate dehydrogenase assembly factor 4, mitochondrial (108 aa).

The segment covering 33–46 (NNNNNNNNNNNNNN) has biased composition (low complexity). Disordered stretches follow at residues 33-59 (NNNN…KENQ) and 79-108 (NPIT…VSDF). The segment covering 95–108 (RYNDWERNGRVSDF) has biased composition (basic and acidic residues).

Belongs to the SDHAF4 family. As to quaternary structure, interacts with SdhA in its FAD-bound form.

It is found in the mitochondrion matrix. Functionally, plays an essential role in the assembly of succinate dehydrogenase (SDH), an enzyme complex (also referred to as respiratory complex II) that is a component of both the tricarboxylic acid (TCA) cycle and the mitochondrial electron transport chain, and which couples the oxidation of succinate to fumarate with the reduction of ubiquinone (coenzyme Q) to ubiquinol. Binds to the flavoprotein subunit SdhA in its FAD-bound form, blocking the generation of excess reactive oxygen species (ROS) and facilitating its assembly with the iron-sulfur protein subunit SdhB into the SDH catalytic dimer. This chain is Succinate dehydrogenase assembly factor 4, mitochondrial, found in Dictyostelium discoideum (Social amoeba).